The sequence spans 554 residues: Carboxypeptidase Y homolog A (554 aa).

The N-terminal stretch at Met1–Ser17 is a signal peptide. Positions Ala18–Lys137 are excised as a propeptide. Cystine bridges form between Cys191/Cys431, Cys325/Cys339, Cys349/Cys372, Cys356/Cys365, and Cys394/Cys401. A glycan (N-linked (GlcNAc...) asparagine) is linked at Asn222. Ser278 is an active-site residue. The active site involves Asp470. Asn518 carries N-linked (GlcNAc...) asparagine glycosylation. Residue His529 is part of the active site.

The protein belongs to the peptidase S10 family.

The protein resides in the vacuole. The enzyme catalyses Release of a C-terminal amino acid with broad specificity.. In terms of biological role, vacuolar carboxypeptidase involved in degradation of small peptides. Digests preferentially peptides containing an aliphatic or hydrophobic residue in P1' position, as well as methionine, leucine or phenylalanine in P1 position of ester substrate. This is Carboxypeptidase Y homolog A (CPYA) from Sordaria macrospora (strain ATCC MYA-333 / DSM 997 / K(L3346) / K-hell).